The chain runs to 1408 residues: DNA-directed RNA polymerase subunit beta'' (1408 aa).

This sequence belongs to the RNA polymerase beta' chain family. RpoC2 subfamily. In plastids the minimal PEP RNA polymerase catalytic core is composed of four subunits: alpha, beta, beta', and beta''. When a (nuclear-encoded) sigma factor is associated with the core the holoenzyme is formed, which can initiate transcription.

It is found in the plastid. The protein localises to the chloroplast. The catalysed reaction is RNA(n) + a ribonucleoside 5'-triphosphate = RNA(n+1) + diphosphate. Its function is as follows. DNA-dependent RNA polymerase catalyzes the transcription of DNA into RNA using the four ribonucleoside triphosphates as substrates. This Psilotum nudum (Whisk fern) protein is DNA-directed RNA polymerase subunit beta''.